Consider the following 626-residue polypeptide: Phosphomethylpyrimidine synthase (626 aa).

The segment at 1 to 22 (MTKQEKAINLSESAQVDQQSVQ) is disordered. A compositionally biased stretch (polar residues) spans 10–22 (LSESAQVDQQSVQ). Substrate contacts are provided by residues Asn232, Met261, Tyr290, His326, 346-348 (SRG), 387-390 (DGLR), and Glu426. His430 is a binding site for Zn(2+). Tyr453 is a binding site for substrate. Position 494 (His494) interacts with Zn(2+). Residues Cys574, Cys577, and Cys582 each coordinate [4Fe-4S] cluster.

This sequence belongs to the ThiC family. In terms of assembly, homodimer. [4Fe-4S] cluster serves as cofactor.

The enzyme catalyses 5-amino-1-(5-phospho-beta-D-ribosyl)imidazole + S-adenosyl-L-methionine = 4-amino-2-methyl-5-(phosphooxymethyl)pyrimidine + CO + 5'-deoxyadenosine + formate + L-methionine + 3 H(+). It participates in cofactor biosynthesis; thiamine diphosphate biosynthesis. Catalyzes the synthesis of the hydroxymethylpyrimidine phosphate (HMP-P) moiety of thiamine from aminoimidazole ribotide (AIR) in a radical S-adenosyl-L-methionine (SAM)-dependent reaction. The sequence is that of Phosphomethylpyrimidine synthase from Pseudomonas putida (strain ATCC 700007 / DSM 6899 / JCM 31910 / BCRC 17059 / LMG 24140 / F1).